A 288-amino-acid polypeptide reads, in one-letter code: Acetyl-coenzyme A carboxylase carboxyl transferase subunit beta (288 aa).

Positions 30 to 288 (IMTKCPKCKK…KLHQEVKKDA (259 aa)) constitute a CoA carboxyltransferase N-terminal domain. Positions 34, 37, 53, and 56 each coordinate Zn(2+). The segment at 34–56 (CPKCKKIMYTKELNENLNVCFNC) adopts a C4-type zinc-finger fold.

This sequence belongs to the AccD/PCCB family. As to quaternary structure, acetyl-CoA carboxylase is a heterohexamer composed of biotin carboxyl carrier protein (AccB), biotin carboxylase (AccC) and two subunits each of ACCase subunit alpha (AccA) and ACCase subunit beta (AccD). Zn(2+) serves as cofactor.

It is found in the cytoplasm. It catalyses the reaction N(6)-carboxybiotinyl-L-lysyl-[protein] + acetyl-CoA = N(6)-biotinyl-L-lysyl-[protein] + malonyl-CoA. The protein operates within lipid metabolism; malonyl-CoA biosynthesis; malonyl-CoA from acetyl-CoA: step 1/1. Functionally, component of the acetyl coenzyme A carboxylase (ACC) complex. Biotin carboxylase (BC) catalyzes the carboxylation of biotin on its carrier protein (BCCP) and then the CO(2) group is transferred by the transcarboxylase to acetyl-CoA to form malonyl-CoA. The polypeptide is Acetyl-coenzyme A carboxylase carboxyl transferase subunit beta (Staphylococcus haemolyticus (strain JCSC1435)).